Reading from the N-terminus, the 109-residue chain is Defensin-B5 (109 aa).

Residues 1-20 (MRGLLPFLFLLSFFLSPIQA) form the signal peptide. The interval 21 to 44 (QPEGREEELEETWSEDRDQAPPRV) is disordered. A propeptide spanning residues 21–70 (QPEGREEELEETWSEDRDQAPPRVVEESEVVGAENEAGLAAGRSYPWIIL) is cleaved from the precursor. Residues 34-44 (SEDRDQAPPRV) are compositionally biased toward basic and acidic residues. Disulfide bonds link Cys-73-Cys-101, Cys-80-Cys-95, and Cys-85-Cys-102. Positions 107–109 (AVP) are excised as a propeptide.

This sequence belongs to the beta-defensin family. Highly expressed in kidney, and expressed at lower levels in testis.

It localises to the secreted. Functionally, has antimicrobial activity. The polypeptide is Defensin-B5 (Ornithorhynchus anatinus (Duckbill platypus)).